The primary structure comprises 236 residues: UPF0257 lipoprotein YnfC (236 aa).

An N-terminal signal peptide occupies residues 1–16 (MKYKLLPCLLAILLTG). Residue cysteine 17 is the site of N-palmitoyl cysteine attachment. The S-diacylglycerol cysteine moiety is linked to residue cysteine 17.

It belongs to the UPF0257 family.

It localises to the cell membrane. This is UPF0257 lipoprotein YnfC from Escherichia coli O127:H6 (strain E2348/69 / EPEC).